The following is a 278-amino-acid chain: Fe(II)/2-oxoglutarate-dependent dioxygenase nvfI (278 aa).

The protein belongs to the asaB hydroxylase/desaturase family.

It catalyses the reaction asnovolin A + 2-oxoglutarate + 2 O2 = fumigatonoid A + succinate + CO2. It participates in secondary metabolite biosynthesis; terpenoid biosynthesis. In terms of biological role, fe(II)/2-oxoglutarate-dependent dioxygenase; part of the gene cluster that mediates the biosynthesis of novofumigatonin, a heavily oxygenated meroterpenoid containing a unique orthoester moiety. The first step of the pathway is the synthesis of 3,5-dimethylorsellinic acid (DMOA) by the polyketide synthase nvfA via condensation of one acetyl-CoA starter unit with 3 malonyl-CoA units and 2 methylations. DMOA is then converted to farnesyl-DMOA by the farnesyltransferase nvfB. Epoxydation by FAD-dependent monooxygenase nvfK, followed by a protonation-initiated cyclization catalyzed by the terpene cyclase nvfL leads to the production of asnavolin H. The short chain dehydrogenase nvfC then as a 3-OH dehydrogenase of asnovolin H to yield chemesin D. There are two branches to synthesize asnovolin A from chemesin D. In one branch, chemesin D undergoes Baeyer-Villiger oxidation by nvfH, methylation by nvfJ, and enoyl reduction by the nvfM D enoylreductase that reduces the double bond between C-5'and C-6', to form respectively asnovolin I, asnovolin K, and asnovolin A. In the other branch, the methylation precedes the Baeyer-Villiger oxidation and the enoyl reduction to yield asnovolin A via the asnovolin J intermediate. Asnovolin A is further converted to fumigatonoid A by the Fe(II)/2-oxoglutarate-dependent dioxygenase nvfI that catalyzes an endoperoxidation reaction. The alpha/beta hydrolase nvfD then acts as an epimerase that converts fumigatonoid A to its C-5' epimer, which then undergoes spontaneous or nvfD-catalyzed lactonization. The following step utilizes the ketoreductase nvfG to produce fumigatonoid B. The dioxygenase nvfE further converts fumigatonoid B into fumigatonoid C. Finally the Fe(II)/2-oxoglutarate-dependent dioxygenase nvfF catalyzes two rounds of oxidation to transform fumigatonoid C into the end product, novofumigatonin A. In Aspergillus novofumigatus (strain IBT 16806), this protein is Fe(II)/2-oxoglutarate-dependent dioxygenase nvfI.